A 248-amino-acid polypeptide reads, in one-letter code: Ribosomal RNA small subunit methyltransferase G (248 aa).

Residues G93, L98, 143–144, and R161 contribute to the S-adenosyl-L-methionine site; that span reads AE.

This sequence belongs to the methyltransferase superfamily. RNA methyltransferase RsmG family.

The protein localises to the cytoplasm. Its function is as follows. Specifically methylates the N7 position of guanine in position 518 of 16S rRNA. The sequence is that of Ribosomal RNA small subunit methyltransferase G from Mycobacterium leprae (strain Br4923).